Here is a 533-residue protein sequence, read N- to C-terminus: Membrane-associated tyrosine- and threonine-specific cdc2-inhibitory kinase (533 aa).

The interval 1 to 35 (MEKHHRLPLPELHDDKHRHKQCNGENSNRFRPPKY) is disordered. The Protein kinase domain maps to 102 to 351 (FERLAKLGEG…AEQLLSHPKL (250 aa)). ATP contacts are provided by residues 108–116 (LGEGSFGEV) and K131. D224 functions as the Proton acceptor in the catalytic mechanism. N229 and D243 together coordinate Mg(2+). Residues S504 and S519 each carry the phosphoserine modification.

The protein belongs to the protein kinase superfamily. Ser/Thr protein kinase family. WEE1 subfamily.

Its subcellular location is the golgi apparatus membrane. It carries out the reaction L-seryl-[protein] + ATP = O-phospho-L-seryl-[protein] + ADP + H(+). The catalysed reaction is L-threonyl-[protein] + ATP = O-phospho-L-threonyl-[protein] + ADP + H(+). In terms of biological role, acts as a negative regulator of entry into mitosis (G2 to M transition) by phosphorylation of Cdk1 specifically when Cdk1 is complexed to cyclins. Mediates phosphorylation of Cdk1 predominantly on 'Thr-14'. Also involved in Golgi fragmentation. May be involved in phosphorylation of Cdk1 on 'Tyr-15' to a lesser degree, however tyrosine kinase activity is unclear and may be indirect. May be a downstream target of Notch signaling pathway during eye development. The chain is Membrane-associated tyrosine- and threonine-specific cdc2-inhibitory kinase (Myt1) from Drosophila melanogaster (Fruit fly).